The following is a 399-amino-acid chain: Forkhead box protein A4 (399 aa).

The fork-head DNA-binding region spans 119-213 (KPPYSYISLI…ENGCYLRRQK (95 aa)). The segment covering 219-234 (RSKSGEREKKVNKPGD) has biased composition (basic and acidic residues). Positions 219-290 (RSKSGEREKK…VGLSPTSEQA (72 aa)) are disordered. A compositionally biased stretch (polar residues) spans 267–277 (STGSSIHQASG).

It is found in the nucleus. Its function is as follows. Transcriptional repressor involved in embryonic nervous system development. Plays a role in the induction and patterning of the anterior-posterior neural axis. Involved in the establishment of floor plate differentiation from neural plate cells during gastrulation. Binds the anf1 promoter sequence to restrict expression of anf1 to the anterior of the neural plate, thereby patterning the forebrain. Can bind to the HNF-3-alpha DNA target sequence. Cooperates with t/bra in a dose-dependent manner to specify dorsal mesoderm formation, including notochord. May be involved in the dorso-ventral patterning of the mesoderm. Binds to DNA via the target sequence 5'-[GA]TAAA[TC]A-3', with 5'-GTAAATA-3' being the preferred binding site. The chain is Forkhead box protein A4 from Xenopus tropicalis (Western clawed frog).